The chain runs to 202 residues: UPF0301 protein BCG_0069 (202 aa).

The protein belongs to the UPF0301 (AlgH) family.

In Mycobacterium bovis (strain BCG / Pasteur 1173P2), this protein is UPF0301 protein BCG_0069.